We begin with the raw amino-acid sequence, 177 residues long: Ribosome maturation factor RimM (177 aa).

A PRC barrel domain is found at 98 to 177 (DDGYYWKDLM…TIEVDWDPGF (80 aa)).

Belongs to the RimM family. As to quaternary structure, binds ribosomal protein uS19.

It localises to the cytoplasm. Its function is as follows. An accessory protein needed during the final step in the assembly of 30S ribosomal subunit, possibly for assembly of the head region. Essential for efficient processing of 16S rRNA. May be needed both before and after RbfA during the maturation of 16S rRNA. It has affinity for free ribosomal 30S subunits but not for 70S ribosomes. This chain is Ribosome maturation factor RimM, found in Enterobacter sp. (strain 638).